A 161-amino-acid polypeptide reads, in one-letter code: MPQFDPSSFPSQIVWLVIALVAMYFVMSRLAIPRLAEVLEQRQRLINDDLKQAEALKAETEAAIAAYETALAEARARAHDEIRAVTEAAAKAAEARNAEVAKALNTRIKDGEARIVQARDEALTHVREVAGAVASDIVGKLAGLRVDDAALTAAVAAAIKE.

The chain crosses the membrane as a helical span at residues 13–33 (IVWLVIALVAMYFVMSRLAIP).

The protein belongs to the ATPase B chain family. In terms of assembly, F-type ATPases have 2 components, F(1) - the catalytic core - and F(0) - the membrane proton channel. F(1) has five subunits: alpha(3), beta(3), gamma(1), delta(1), epsilon(1). F(0) has three main subunits: a(1), b(2) and c(10-14). The alpha and beta chains form an alternating ring which encloses part of the gamma chain. F(1) is attached to F(0) by a central stalk formed by the gamma and epsilon chains, while a peripheral stalk is formed by the delta and b chains.

The protein resides in the cell inner membrane. F(1)F(0) ATP synthase produces ATP from ADP in the presence of a proton or sodium gradient. F-type ATPases consist of two structural domains, F(1) containing the extramembraneous catalytic core and F(0) containing the membrane proton channel, linked together by a central stalk and a peripheral stalk. During catalysis, ATP synthesis in the catalytic domain of F(1) is coupled via a rotary mechanism of the central stalk subunits to proton translocation. In terms of biological role, component of the F(0) channel, it forms part of the peripheral stalk, linking F(1) to F(0). The b'-subunit is a diverged and duplicated form of b found in plants and photosynthetic bacteria. This chain is ATP synthase subunit b 2 (atpF2), found in Rhodospirillum rubrum (strain ATCC 11170 / ATH 1.1.1 / DSM 467 / LMG 4362 / NCIMB 8255 / S1).